Consider the following 830-residue polypeptide: Periplasmic nitrate reductase (830 aa).

Residues 1-32 (MELNRRDFMKANAAVAAAAAAGITIPVKNVHA) constitute a signal peptide (tat-type signal). The 57-residue stretch at 39–95 (IRWDKAPCRYCGTGCSVLVGTKDGRVVATQGDPDAEVNRGLNCIKGYFLSKIMYGAD) folds into the 4Fe-4S Mo/W bis-MGD-type domain. [4Fe-4S] cluster-binding residues include Cys46, Cys49, Cys53, and Cys81. Mo-bis(molybdopterin guanine dinucleotide) is bound by residues Lys83, Gln151, Asn176, Cys180, 213–220 (WGSNMAEM), 244–248 (STFEH), Met374, Gln378, Asn484, 510–511 (SD), Lys533, Asp560, and 720–729 (TGRVLEHWHT). A substrate-binding site is contributed by Phe796. Positions 804 and 821 each coordinate Mo-bis(molybdopterin guanine dinucleotide).

The protein belongs to the prokaryotic molybdopterin-containing oxidoreductase family. NasA/NapA/NarB subfamily. Component of the periplasmic nitrate reductase NapAB complex composed of NapA and NapB. [4Fe-4S] cluster is required as a cofactor. It depends on Mo-bis(molybdopterin guanine dinucleotide) as a cofactor. Predicted to be exported by the Tat system. The position of the signal peptide cleavage has not been experimentally proven.

It is found in the periplasm. It catalyses the reaction 2 Fe(II)-[cytochrome] + nitrate + 2 H(+) = 2 Fe(III)-[cytochrome] + nitrite + H2O. Functionally, catalytic subunit of the periplasmic nitrate reductase complex NapAB. Receives electrons from NapB and catalyzes the reduction of nitrate to nitrite. This is Periplasmic nitrate reductase from Mannheimia succiniciproducens (strain KCTC 0769BP / MBEL55E).